The chain runs to 230 residues: 7-cyano-7-deazaguanine synthase (230 aa).

An ATP-binding site is contributed by 8 to 18 (LSGGMDSAVVT). Positions 186, 196, 199, and 202 each coordinate Zn(2+).

It belongs to the QueC family. The cofactor is Zn(2+).

The enzyme catalyses 7-carboxy-7-deazaguanine + NH4(+) + ATP = 7-cyano-7-deazaguanine + ADP + phosphate + H2O + H(+). It functions in the pathway purine metabolism; 7-cyano-7-deazaguanine biosynthesis. In terms of biological role, catalyzes the ATP-dependent conversion of 7-carboxy-7-deazaguanine (CDG) to 7-cyano-7-deazaguanine (preQ(0)). The chain is 7-cyano-7-deazaguanine synthase from Xylella fastidiosa (strain M23).